The sequence spans 309 residues: MEIILAEPRGFCAGVKRAVDILAITLEKYKNERQVYVLHEIVHNKYIVEDFKKQGVVFVSSIEEIEDNEGILIFSAHGVSKNIEDEAKRKGIQVIDATCPLVNKVHKEAKRYENSGKELILIGHENHPEVKGIRGRVNNPITLVQTLQDVYDLKVKDPDNLSYVTQTTLSIDDTRDIIAALKLRFPGITGPDLKDICYATQNRQNAVKKLAEIVDMVLVVGSKNSSNSNRLLDLCTARGKRAYLIDNYSCVNKSWFQGVEKIGITAGASAPDILVDELIDYLKVNLSVKISVMPGGITENVQFKIPNLV.

C12 contributes to the [4Fe-4S] cluster binding site. Positions 43 and 77 each coordinate (2E)-4-hydroxy-3-methylbut-2-enyl diphosphate. Dimethylallyl diphosphate is bound by residues H43 and H77. Isopentenyl diphosphate-binding residues include H43 and H77. C99 serves as a coordination point for [4Fe-4S] cluster. Residue H127 coordinates (2E)-4-hydroxy-3-methylbut-2-enyl diphosphate. Dimethylallyl diphosphate is bound at residue H127. Residue H127 participates in isopentenyl diphosphate binding. The active-site Proton donor is E129. T167 serves as a coordination point for (2E)-4-hydroxy-3-methylbut-2-enyl diphosphate. Residue C197 coordinates [4Fe-4S] cluster. (2E)-4-hydroxy-3-methylbut-2-enyl diphosphate is bound by residues S225, S226, N227, and S269. The dimethylallyl diphosphate site is built by S225, S226, N227, and S269. Isopentenyl diphosphate-binding residues include S225, S226, N227, and S269.

It belongs to the IspH family. [4Fe-4S] cluster serves as cofactor.

It carries out the reaction isopentenyl diphosphate + 2 oxidized [2Fe-2S]-[ferredoxin] + H2O = (2E)-4-hydroxy-3-methylbut-2-enyl diphosphate + 2 reduced [2Fe-2S]-[ferredoxin] + 2 H(+). The enzyme catalyses dimethylallyl diphosphate + 2 oxidized [2Fe-2S]-[ferredoxin] + H2O = (2E)-4-hydroxy-3-methylbut-2-enyl diphosphate + 2 reduced [2Fe-2S]-[ferredoxin] + 2 H(+). It functions in the pathway isoprenoid biosynthesis; dimethylallyl diphosphate biosynthesis; dimethylallyl diphosphate from (2E)-4-hydroxy-3-methylbutenyl diphosphate: step 1/1. Its pathway is isoprenoid biosynthesis; isopentenyl diphosphate biosynthesis via DXP pathway; isopentenyl diphosphate from 1-deoxy-D-xylulose 5-phosphate: step 6/6. Its function is as follows. Catalyzes the conversion of 1-hydroxy-2-methyl-2-(E)-butenyl 4-diphosphate (HMBPP) into a mixture of isopentenyl diphosphate (IPP) and dimethylallyl diphosphate (DMAPP). Acts in the terminal step of the DOXP/MEP pathway for isoprenoid precursor biosynthesis. The protein is 4-hydroxy-3-methylbut-2-enyl diphosphate reductase of Wolbachia pipientis wMel.